The primary structure comprises 258 residues: Imidazole glycerol phosphate synthase subunit HisF (258 aa).

Residues Asp-11 and Asp-130 contribute to the active site.

This sequence belongs to the HisA/HisF family. In terms of assembly, heterodimer of HisH and HisF.

It is found in the cytoplasm. It catalyses the reaction 5-[(5-phospho-1-deoxy-D-ribulos-1-ylimino)methylamino]-1-(5-phospho-beta-D-ribosyl)imidazole-4-carboxamide + L-glutamine = D-erythro-1-(imidazol-4-yl)glycerol 3-phosphate + 5-amino-1-(5-phospho-beta-D-ribosyl)imidazole-4-carboxamide + L-glutamate + H(+). It functions in the pathway amino-acid biosynthesis; L-histidine biosynthesis; L-histidine from 5-phospho-alpha-D-ribose 1-diphosphate: step 5/9. Its function is as follows. IGPS catalyzes the conversion of PRFAR and glutamine to IGP, AICAR and glutamate. The HisF subunit catalyzes the cyclization activity that produces IGP and AICAR from PRFAR using the ammonia provided by the HisH subunit. In Salmonella arizonae (strain ATCC BAA-731 / CDC346-86 / RSK2980), this protein is Imidazole glycerol phosphate synthase subunit HisF.